We begin with the raw amino-acid sequence, 839 residues long: Probable beta-glucosidase I (839 aa).

N-linked (GlcNAc...) asparagine glycosylation occurs at Asn-197. Residue Asp-225 is part of the active site. A PA14 domain is found at 395 to 555; that stretch reads DGKKGFSFRV…SQEELIAKAA (161 aa).

The protein belongs to the glycosyl hydrolase 3 family.

The protein localises to the secreted. It carries out the reaction Hydrolysis of terminal, non-reducing beta-D-glucosyl residues with release of beta-D-glucose.. The protein operates within glycan metabolism; cellulose degradation. Its function is as follows. Beta-glucosidases are one of a number of cellulolytic enzymes involved in the degradation of cellulosic biomass. Catalyzes the last step releasing glucose from the inhibitory cellobiose. This is Probable beta-glucosidase I (bglI) from Aspergillus terreus (strain NIH 2624 / FGSC A1156).